A 219-amino-acid chain; its full sequence is Redox-sensing transcriptional repressor Rex (219 aa).

A DNA-binding region (H-T-H motif) is located at residues 18–57 (LYYRFIQSLYNSGKLRVSSAELSEAVKVDSATIRRDFSYF). NAD(+) is bound at residue 92–97 (GVGHLG).

The protein belongs to the transcriptional regulatory Rex family. In terms of assembly, homodimer.

Its subcellular location is the cytoplasm. Modulates transcription in response to changes in cellular NADH/NAD(+) redox state. In Exiguobacterium sibiricum (strain DSM 17290 / CCUG 55495 / CIP 109462 / JCM 13490 / 255-15), this protein is Redox-sensing transcriptional repressor Rex.